The following is a 106-amino-acid chain: MATLGFVTPEAPFESSKPPIFEGLSPTVYSNPEGFKEKFLRKTRENPVVPIGFLCTAAVLTNGLYCFHQGNSQCSRLMMHTQIAAQGFTIAAILLGLAATAMKSPP.

Over M1–N46 the chain is Cytoplasmic. Positions I20–P106 constitute an HIG1 domain. Residues P47–F67 traverse the membrane as a helical segment. Residues H68 to T81 lie on the Extracellular side of the membrane. Residues Q82 to M102 traverse the membrane as a helical segment. At K103–P106 the chain is on the cytoplasmic side.

The protein resides in the membrane. In Homo sapiens (Human), this protein is HIG1 domain family member 2B (HIGD2B).